The sequence spans 126 residues: uncharacterized protein (126 aa).

Disordered regions lie at residues 15 to 72 (PEWG…SDPQ) and 93 to 126 (TQIP…TTSN). 2 stretches are compositionally biased toward basic and acidic residues: residues 29–46 (DPLD…RVPE) and 55–64 (VQEDSREHGQ).

This is an uncharacterized protein from Homo sapiens (Human).